The sequence spans 655 residues: MRAARMAQSTGRQLLRLRGVSSWPGELLGQPRPGPARRPYASGVAQAAVDQSDSQPSEASTREKRANSVSKSFAVGTFKGQLTTDQVFPYPSVLNEDQTQFLKELVGPVTRFFEEVNDAAKNDMLERVEETTMQGLKELGAFGLQVPNELGGVGLCNTQYARLVEIVGMYDLGVGIVLGAHQSIGFKGILLFGTKAQKEKYLPKLASGETIAAFCLTEPSSGSDAASIRSSAVPSPCGKYYTLNGSKIWISNGGLADIFTVFAKTPVTDTATGAVKEKITAFVVERSFGGVTHGPPEKKMGIKASNTAEVYFDGVRVPAENVLGEVGGGFKVAMHILNNGRFGMAAALAGTMKGIIAKAVDHAANRTQFGEKIHNFGLIQEKLARMAMLQYVTESMAYMVSANMDQGSTDFQIEAAISKIFGSEAAWKVTDECIQIMGGMGFMKEPGVERVLRDLRIFRIFEGTNDILRLFVALQGCMDKGKELSGLGNALKNPFGNAGLLLGEAGKQLRRRAGLGSGLSLSGIVHQELSRSGELAVQALEQFATVVEAKLIKHKKDIINEQFLLQRLADSAIDLYAMVVVLSRASRSLSEGHPTAQHEKMLCDSWCIEAAARIRENMTALQSDPQQQELFRNFKSISKALVERGGVVTSNPLGF.

A mitochondrion-targeting transit peptide spans 1 to 40 (MRAARMAQSTGRQLLRLRGVSSWPGELLGQPRPGPARRPY). Positions 22-66 (SWPGELLGQPRPGPARRPYASGVAQAAVDQSDSQPSEASTREKRA) are disordered. Positions 41–482 (ASGVAQAAVD…ALQGCMDKGK (442 aa)) are catalytic. Residues 49-59 (VDQSDSQPSEA) are compositionally biased toward polar residues. Position 71 is an N6-acetyllysine; alternate (Lys71). N6-succinyllysine; alternate is present on Lys71. Lys195 is modified (N6-succinyllysine). FAD is bound at residue 214–223 (FCLTEPSSGS). An S-nitrosocysteine modification is found at Cys237. N6-acetyllysine; alternate is present on Lys239. Lys239 carries the post-translational modification N6-succinyllysine; alternate. An FAD-binding site is contributed by 249 to 251 (WIS). Residues Lys276 and Lys278 each carry the N6-acetyllysine; alternate modification. An N6-succinyllysine; alternate mark is found at Lys276 and Lys278. Position 298 is an N6-acetyllysine (Lys298). Lys331 is subject to N6-acetyllysine; alternate. Lys331 bears the N6-succinyllysine; alternate mark. Lys372 is modified (N6-succinyllysine). Substrate is bound at residue 461–463 (FEG). The active-site Proton acceptor is Glu462. 464 to 466 (TND) lines the FAD pocket. N6-acetyllysine; alternate is present on Lys482. N6-succinyllysine; alternate is present on Lys482. Residues 483–516 (ELSGLGNALKNPFGNAGLLLGEAGKQLRRRAGLG) are membrane-anchoring. Ser517 and Ser522 each carry phosphoserine. Lys550 carries the N6-acetyllysine modification. At Lys556 the chain carries N6-acetyllysine; alternate. Lys556 is modified (N6-succinyllysine; alternate). Position 562 (Gln562) interacts with FAD. The residue at position 639 (Lys639) is an N6-succinyllysine.

This sequence belongs to the acyl-CoA dehydrogenase family. As to quaternary structure, homodimer. Homodimerizes after import into the mitochondrion. FAD serves as cofactor. Post-translationally, S-nitrosylation at Cys-237 in liver improves catalytic efficiency.

The protein resides in the mitochondrion inner membrane. It catalyses the reaction a very-long-chain 2,3-saturated fatty acyl-CoA + oxidized [electron-transfer flavoprotein] + H(+) = a very-long-chain (2E)-enoyl-CoA + reduced [electron-transfer flavoprotein]. The catalysed reaction is dodecanoyl-CoA + oxidized [electron-transfer flavoprotein] + H(+) = (2E)-dodecenoyl-CoA + reduced [electron-transfer flavoprotein]. The enzyme catalyses tetradecanoyl-CoA + oxidized [electron-transfer flavoprotein] + H(+) = (2E)-tetradecenoyl-CoA + reduced [electron-transfer flavoprotein]. It carries out the reaction oxidized [electron-transfer flavoprotein] + hexadecanoyl-CoA + H(+) = (2E)-hexadecenoyl-CoA + reduced [electron-transfer flavoprotein]. It catalyses the reaction octadecanoyl-CoA + oxidized [electron-transfer flavoprotein] + H(+) = (2E)-octadecenoyl-CoA + reduced [electron-transfer flavoprotein]. The catalysed reaction is eicosanoyl-CoA + oxidized [electron-transfer flavoprotein] + H(+) = (2E)-eicosenoyl-CoA + reduced [electron-transfer flavoprotein]. The enzyme catalyses docosanoyl-CoA + oxidized [electron-transfer flavoprotein] + H(+) = (2E)-docosenoyl-CoA + reduced [electron-transfer flavoprotein]. It carries out the reaction tetracosanoyl-CoA + oxidized [electron-transfer flavoprotein] + H(+) = (2E)-tetracosenoyl-CoA + reduced [electron-transfer flavoprotein]. The protein operates within lipid metabolism; mitochondrial fatty acid beta-oxidation. In terms of biological role, very long-chain specific acyl-CoA dehydrogenase is one of the acyl-CoA dehydrogenases that catalyze the first step of mitochondrial fatty acid beta-oxidation, an aerobic process breaking down fatty acids into acetyl-CoA and allowing the production of energy from fats. The first step of fatty acid beta-oxidation consists in the removal of one hydrogen from C-2 and C-3 of the straight-chain fatty acyl-CoA thioester, resulting in the formation of trans-2-enoyl-CoA. Among the different mitochondrial acyl-CoA dehydrogenases, very long-chain specific acyl-CoA dehydrogenase acts specifically on acyl-CoAs with saturated 12 to 24 carbons long primary chains. This is Very long-chain specific acyl-CoA dehydrogenase, mitochondrial from Bos taurus (Bovine).